A 146-amino-acid chain; its full sequence is Putative pre-16S rRNA nuclease (146 aa).

The protein belongs to the YqgF nuclease family.

The protein resides in the cytoplasm. Functionally, could be a nuclease involved in processing of the 5'-end of pre-16S rRNA. In Burkholderia pseudomallei (strain 668), this protein is Putative pre-16S rRNA nuclease.